We begin with the raw amino-acid sequence, 567 residues long: Urease subunit alpha (567 aa).

Residues 128–567 form the Urease domain; it reads GGIDAHVHFI…LPMSQRYFLF (440 aa). 3 residues coordinate Ni(2+): H133, H135, and K216. An N6-carboxylysine modification is found at K216. H218 contacts substrate. Residues H245 and H271 each coordinate Ni(2+). The Proton donor role is filled by H319. A Ni(2+)-binding site is contributed by D359.

The protein belongs to the metallo-dependent hydrolases superfamily. Urease alpha subunit family. As to quaternary structure, heterotrimer of UreA (gamma), UreB (beta) and UreC (alpha) subunits. Three heterotrimers associate to form the active enzyme. The cofactor is Ni cation. Carboxylation allows a single lysine to coordinate two nickel ions.

The protein localises to the cytoplasm. The catalysed reaction is urea + 2 H2O + H(+) = hydrogencarbonate + 2 NH4(+). It functions in the pathway nitrogen metabolism; urea degradation; CO(2) and NH(3) from urea (urease route): step 1/1. The polypeptide is Urease subunit alpha (Blochmanniella pennsylvanica (strain BPEN)).